The sequence spans 1177 residues: Chromosome partition protein Smc (1177 aa).

34-41 contacts ATP; sequence ANGSGKSN. The stretch at 167–506 forms a coiled coil; sequence SGIAEYDSKK…IAAEAQREVR (340 aa). Residues 521-627 form the SMC hinge domain; the sequence is GIYGTLAELI…VIVNSMEEAR (107 aa). Residues 659 to 1012 are a coiled coil; it reads LAVDTTKLRE…NEIEKEKKNV (354 aa).

The protein belongs to the SMC family. In terms of assembly, homodimer.

The protein localises to the cytoplasm. In terms of biological role, required for chromosome condensation and partitioning. Binds single-stranded but not double-stranded DNA. The protein is Chromosome partition protein Smc of Pyrococcus furiosus (strain ATCC 43587 / DSM 3638 / JCM 8422 / Vc1).